The primary structure comprises 302 residues: UDP-N-acetylenolpyruvoylglucosamine reductase (302 aa).

Residues 32-195 (LGGPADLLAR…VTVTLELVPD (164 aa)) enclose the FAD-binding PCMH-type domain. Residue R175 is part of the active site. S224 (proton donor) is an active-site residue. E294 is an active-site residue.

Belongs to the MurB family. FAD is required as a cofactor.

It is found in the cytoplasm. The enzyme catalyses UDP-N-acetyl-alpha-D-muramate + NADP(+) = UDP-N-acetyl-3-O-(1-carboxyvinyl)-alpha-D-glucosamine + NADPH + H(+). It participates in cell wall biogenesis; peptidoglycan biosynthesis. Functionally, cell wall formation. This chain is UDP-N-acetylenolpyruvoylglucosamine reductase, found in Moorella thermoacetica (strain ATCC 39073 / JCM 9320).